A 390-amino-acid chain; its full sequence is MANNEIMTINMGPQHPSTHGVLRMVIELDGETILKIDPDIGYLHRGVEKLSEHRTYHQTLPLTDRLDYLAPMSNNLGYMLAVEKLLGIEVPERAQTIRIIMTELTRLQSHLVWLACHALDIGAMTVFIYAFREREVIMETYELISGARMTSNFFRAGGLSQDVPAEFEKKVRDFVAEMPGFIDTYEGLLTGNPIWRKRTIGNGVISAEDATDIGITGPALRGSGVDFDLRRDIPYAGYENYQFKVPTGKNCDTFDRYQVRLIEMRESCKIVNQALERLKPGPVLADAPQVCYPPKDSVYNSIEGLIHHFKIASEGYPVPEGEVYMGVEAPKGELGFYLVSDGSSKPYRMRVRPPSFVNLQAIEKMAKGAMLADLVAIIGTLDIVLGEIDR.

The protein belongs to the complex I 49 kDa subunit family. As to quaternary structure, NDH-1 is composed of 14 different subunits. Subunits NuoB, C, D, E, F, and G constitute the peripheral sector of the complex.

Its subcellular location is the cell inner membrane. It catalyses the reaction a quinone + NADH + 5 H(+)(in) = a quinol + NAD(+) + 4 H(+)(out). Its function is as follows. NDH-1 shuttles electrons from NADH, via FMN and iron-sulfur (Fe-S) centers, to quinones in the respiratory chain. The immediate electron acceptor for the enzyme in this species is believed to be ubiquinone. Couples the redox reaction to proton translocation (for every two electrons transferred, four hydrogen ions are translocated across the cytoplasmic membrane), and thus conserves the redox energy in a proton gradient. This chain is NADH-quinone oxidoreductase subunit D, found in Trichlorobacter lovleyi (strain ATCC BAA-1151 / DSM 17278 / SZ) (Geobacter lovleyi).